The following is a 411-amino-acid chain: Glutamate dehydrogenase 1, mitochondrial (411 aa).

Residues 1-18 constitute a mitochondrion transit peptide; that stretch reads MNALAATSRNFKQAAKLL. Lysine 102 is an active-site residue.

The protein belongs to the Glu/Leu/Phe/Val dehydrogenases family.

The protein localises to the mitochondrion. The catalysed reaction is L-glutamate + NAD(+) + H2O = 2-oxoglutarate + NH4(+) + NADH + H(+). It carries out the reaction L-glutamate + NADP(+) + H2O = 2-oxoglutarate + NH4(+) + NADPH + H(+). The chain is Glutamate dehydrogenase 1, mitochondrial (GDH1) from Oryza sativa subsp. indica (Rice).